We begin with the raw amino-acid sequence, 519 residues long: Glutamate--cysteine ligase (519 aa).

Belongs to the glutamate--cysteine ligase type 1 family. Type 1 subfamily.

The enzyme catalyses L-cysteine + L-glutamate + ATP = gamma-L-glutamyl-L-cysteine + ADP + phosphate + H(+). It participates in sulfur metabolism; glutathione biosynthesis; glutathione from L-cysteine and L-glutamate: step 1/2. This chain is Glutamate--cysteine ligase, found in Edwardsiella ictaluri (strain 93-146).